Consider the following 321-residue polypeptide: uncharacterized protein (321 aa).

The signal sequence occupies residues Met1 to Ala22.

It belongs to the bacterial solute-binding protein 1 family. WtpA subfamily.

This is an uncharacterized protein from Petrotoga mobilis (strain DSM 10674 / SJ95).